Consider the following 453-residue polypeptide: Sodium/alanine symporter AgcS (453 aa).

Residues 1–17 (MDFVSLVNTVNSFVWGP) lie on the Extracellular side of the membrane. Residues 18–32 (YMLVLLLGTGIFLTL) traverse the membrane as a helical segment. Topologically, residues 33-67 (RLGFMQIHTLPYALKLAFSKHQDETSEGDISHFQA) are cytoplasmic. The helical transmembrane segment at 68-89 (LMTALAATIGTGNIAGVATAYV) threads the bilayer. Threonine 75 contributes to the D-alanine binding site. L-alanine-binding residues include threonine 75 and glycine 79. Asparagine 80 serves as a coordination point for D-alanine. Over 90–92 (LGG) the chain is Extracellular. Residues 93–111 (PGAIFWMWVTAFFGMATKY) traverse the membrane as a helical segment. Over 112 to 148 (AEAVLAIKYRTVDDNGEMAGGPMYFLEKGLPDHGLGK) the chain is Cytoplasmic. Residues 149 to 179 (ILGVAFAFFGAFAAFGIGNMVQTNSVADAVA) traverse the membrane as a helical segment. Position 170 (glutamine 170) interacts with D-alanine. Glutamine 170 serves as a coordination point for L-alanine. At 180–186 (SNFGVDP) the chain is on the extracellular side. A helical transmembrane segment spans residues 187–202 (LITGFVLAIFTAAVIL). Residues 203-206 (GGIK) lie on the Cytoplasmic side of the membrane. The chain crosses the membrane as a helical span at residues 207–233 (SIGKATGIIVPFMAVFYILAGLVILAM). At 234–258 (NIGYIIPAFGTIFSSAFNFSAGFGA) the chain is on the extracellular side. The helical transmembrane segment at 259–274 (LIGTAIMWGVKRGVFS) threads the bilayer. Residue 273-274 (FS) participates in D-alanine binding. 273-276 (FSNE) contacts L-alanine. Over 275–300 (NEAGLGSAPIAAAAAKTDHPGRQALV) the chain is Cytoplasmic. Residues 301-322 (SMTGTFLDTIVVCTITGLVLTI) traverse the membrane as a helical segment. At 323–350 (AGLKAFPGLTDLTGASLTAASFDALMPM) the chain is on the extracellular side. A helical membrane pass occupies residues 351-378 (GGLIVTIGLVFFAYSTVLGWSYYGEKCF). Residues 379 to 386 (EYLIGTKG) lie on the Cytoplasmic side of the membrane. Residues 387–403 (IRLYRIAFVLVAFWGAT) form a helical membrane-spanning segment. Over 404-408 (ASLPL) the chain is Extracellular. A helical transmembrane segment spans residues 409–430 (VWNIADTLNGAMAIPNLIGLLL). Topologically, residues 431 to 453 (LSGVVVSETKAFNEIRKNEAKNA) are cytoplasmic.

It belongs to the alanine or glycine:cation symporter (AGCS) (TC 2.A.25) family.

The protein resides in the cell membrane. It carries out the reaction D-alanine(in) + Na(+)(in) = D-alanine(out) + Na(+)(out). The catalysed reaction is L-alanine(in) + Na(+)(in) = L-alanine(out) + Na(+)(out). The enzyme catalyses glycine(in) + Na(+)(in) = glycine(out) + Na(+)(out). Catalyzes the sodium-dependent uptake of extracellular D-alanine and L-alanine. Can also transport glycine. Binds glycine and both enantiomers of alanine, while strictly excluding other amino acids. This is Sodium/alanine symporter AgcS from Methanococcus maripaludis (strain DSM 14266 / JCM 13030 / NBRC 101832 / S2 / LL).